The sequence spans 90 residues: Probable Fe(2+)-trafficking protein (90 aa).

This sequence belongs to the Fe(2+)-trafficking protein family.

Functionally, could be a mediator in iron transactions between iron acquisition and iron-requiring processes, such as synthesis and/or repair of Fe-S clusters in biosynthetic enzymes. The polypeptide is Probable Fe(2+)-trafficking protein (Pseudomonas syringae pv. tomato (strain ATCC BAA-871 / DC3000)).